The chain runs to 274 residues: MFTDKETHRKPFPTWAHLLHSEPSKQFVFGNWKMNKTLTEAQTFLKSFISSDILSNPQIITGIIPPFTLLSACQQAVSDSPIFLGAQTTHEADSGAFTGEISAPMLKDIGVDFVLIGHSERRHIFHEQNPVLAEKAAAAIHSGMIPVLCIGETLEEQESGATQDILLNQLTIGLSKLPEQASFILAYEPVWAIGTGKVAHPDLVQETHAFCRKTIASLFSKDIAERTPILYGGSVKADDARSLSLCPDVNGLLVGGASLSSENFLSIIQQVDIP.

Residue 31 to 33 participates in substrate binding; the sequence is NWK. His118 acts as the Electrophile in catalysis. The Proton acceptor role is filled by Glu188. Residues Gly194, Ser234, and 255-256 contribute to the substrate site; that span reads GG.

This sequence belongs to the triosephosphate isomerase family. Homodimer.

The protein localises to the cytoplasm. It catalyses the reaction D-glyceraldehyde 3-phosphate = dihydroxyacetone phosphate. It participates in carbohydrate biosynthesis; gluconeogenesis. The protein operates within carbohydrate degradation; glycolysis; D-glyceraldehyde 3-phosphate from glycerone phosphate: step 1/1. Involved in the gluconeogenesis. Catalyzes stereospecifically the conversion of dihydroxyacetone phosphate (DHAP) to D-glyceraldehyde-3-phosphate (G3P). The sequence is that of Triosephosphate isomerase from Chlamydia trachomatis serovar A (strain ATCC VR-571B / DSM 19440 / HAR-13).